We begin with the raw amino-acid sequence, 101 residues long: Replication restart protein PriB (101 aa).

The region spanning 1-101 is the SSB domain; that stretch reads MTTNNLVLAG…LHAENVELKT (101 aa).

The protein belongs to the PriB family. Homodimer. Interacts with PriA and DnaT. Component of the replication restart primosome. Primosome assembly occurs via a 'hand-off' mechanism. PriA binds to replication forks, subsequently PriB then DnaT bind; DnaT then displaces ssDNA to generate the helicase loading substrate.

Involved in the restart of stalled replication forks, which reloads the replicative helicase on sites other than the origin of replication; the PriA-PriB pathway is the major replication restart pathway. During primosome assembly it facilitates complex formation between PriA and DnaT on DNA; stabilizes PriA on DNA. Stimulates the DNA unwinding activity of PriA helicase. The protein is Replication restart protein PriB of Shewanella pealeana (strain ATCC 700345 / ANG-SQ1).